The chain runs to 642 residues: Eukaryotic translation initiation factor 2A (642 aa).

WD repeat units lie at residues 69-115 (MKLS…KKDC), 186-224 (TYLISPAEHPTICTFTPEKGGKPAQLIIWALSEGKITKK), 289-331 (LTTG…HSLP), and 374-419 (FDAT…VFVK). The disordered stretch occupies residues 485 to 593 (ISQHPSREAS…KETSPEEKKI (109 aa)). Composition is skewed to low complexity over residues 493–507 (ASSNGNGSKAKAGGA) and 563–583 (TSPDSTPAPSAPASTNAPTNN). 3 positions are modified to phosphoserine: Ser564, Ser567, and Ser572.

Belongs to the WD repeat EIF2A family. In terms of processing, ubiquitinated, probably leading to its degradation. May explain why it has a short half-life of 17 minutes.

Functions in the early steps of protein synthesis of a small number of specific mRNAs. Acts by directing the binding of methionyl-tRNAi to 40S ribosomal subunits. In contrast to the eIF-2 complex, it binds methionyl-tRNAi to 40S subunits in a codon-dependent manner, whereas the eIF-2 complex binds methionyl-tRNAi to 40S subunits in a GTP-dependent manner. Specifically associates with both 40S subunits and 80S ribosomes. This is Eukaryotic translation initiation factor 2A from Saccharomyces cerevisiae (strain ATCC 204508 / S288c) (Baker's yeast).